A 799-amino-acid chain; its full sequence is Target of rapamycin complex 1 subunit TCO89 (799 aa).

The segment at 18-41 is disordered; the sequence is NASTVSHQSKPFRQFSTRSRAKSN. 2 positions are modified to phosphothreonine: threonine 52 and threonine 82. Residues serine 84, serine 104, serine 107, serine 115, and serine 144 each carry the phosphoserine modification. Positions 97–126 are enriched in polar residues; that stretch reads NQGKRSASFHSPVHNTLLSPKNSSHSNTGT. 2 disordered regions span residues 97-171 and 201-284; these read NQGK…DNIE and LQSP…ADID. A compositionally biased stretch (basic and acidic residues) spans 147–156; it reads DAQESKKSES. Residues 157-170 are compositionally biased toward acidic residues; the sequence is TTDEEVECFSEDNI. 2 positions are modified to phosphoserine: serine 203 and serine 215. A compositionally biased stretch (basic and acidic residues) spans 213-224; the sequence is DKSGTDGKENHR. Residues 233-243 show a composition bias toward polar residues; that stretch reads LSSNNYFGESS. Residues 244–253 show a composition bias toward basic and acidic residues; sequence HSIEHQKDGE. Over residues 254 to 269 the composition is skewed to polar residues; it reads TSPSSIETKLNATSVI. Serine 290 carries the post-translational modification Phosphoserine. Residues 324–391 are disordered; it reads AHKSNQKPSH…PDDISSAGTK (68 aa). Positions 332–346 are enriched in basic and acidic residues; sequence SHSDEQFDQEDHIDA. Low complexity predominate over residues 348 to 363; the sequence is RSNSSRKSDSSFMSLR. The residue at position 397 (serine 397) is a Phosphoserine. Disordered stretches follow at residues 418–476 and 538–568; these read FENS…QSTF and NKNSAAPASPLSNEHITSSTNSGSDANRQSN. 2 stretches are compositionally biased toward polar residues: residues 420 to 429 and 461 to 476; these read NSSSIQNSLG and GRSQLGQNIPNSQSTF. The residue at position 575 (serine 575) is a Phosphoserine. A disordered region spans residues 663–685; it reads IRKKSHNDAQSIAHSSSDTDHKD. At serine 707 the chain carries Phosphoserine.

The protein belongs to the TORC subunit TCO89 family. In terms of assembly, the target of rapamycin complex 1 (TORC1) is composed of at least KOG1, LST8, TCO89 and either TOR1 (TORC1-A) or TOR2 (TORC1-B). Interacts with PIB2; following activation of PIB2 by glutamine or cysteine. TORC1 binds to and is inhibited by FKBP-rapamycin.

The protein localises to the cell membrane. It is found in the vacuole membrane. Its function is as follows. Component of TORC1, which regulates multiple cellular processes to control cell growth in response to environmental signals. Nutrient limitation and environmental stress signals cause inactivation of TORC1. Active TORC1 positively controls ribosome biogenesis via control of rRNA, ribosomal protein and tRNA gene expression, and rRNA processing. TORC1 positively controls protein biosynthesis by regulation of mRNA stability, translation initiation factor activity, and high-affinity amino acid permeases that serve to provide amino acids for use by the translation machinery. TORC1 also promotes growth by sequestering a number of nutrient and general stress-responsive transcription factors in the cytoplasm. TORC1 negatively controls macroautophagy, a process to recycle surplus cytoplasmic mass under nutrient starvation conditions. The protein is Target of rapamycin complex 1 subunit TCO89 (TCO89) of Saccharomyces cerevisiae (strain ATCC 204508 / S288c) (Baker's yeast).